A 148-amino-acid polypeptide reads, in one-letter code: MICISGIPGTGKSTICNLLNDLGYTCVEGNALAVKYGCLSGDEVDVDCLSDRMRSDNFKGIVAAHYAHLLPCNIVIILEADESALRQRMMDRGYSPEKIDENLDAQRSDTIYAESLERLPANRIFRIRNADLNVALSDILRIIGGRNG.

ATP is bound by residues G9, G11, K12, S13, and T14. The segment at 28 to 44 (EGNALAVKYGCLSGDEV) is NMP. An LID region spans residues 91–101 (DRGYSPEKIDE). Residue R92 coordinates ATP.

The protein belongs to the adenylate kinase family. AK6 subfamily. In terms of assembly, interacts with uS11. Not a structural component of 40S pre-ribosomes, but transiently interacts with them by binding to uS11.

It carries out the reaction AMP + ATP = 2 ADP. The enzyme catalyses ATP + H2O = ADP + phosphate + H(+). Broad-specificity nucleoside monophosphate (NMP) kinase that catalyzes the reversible transfer of the terminal phosphate group between nucleoside triphosphates and monophosphates. Also has ATPase activity. Involved in the late maturation steps of the 30S ribosomal particles, specifically 16S rRNA maturation. While NMP activity is not required for ribosome maturation, ATPase activity is. Associates transiently with small ribosomal subunit protein uS11. ATP hydrolysis breaks the interaction with uS11. May temporarily remove uS11 from the ribosome to enable a conformational change of the ribosomal RNA that is needed for the final maturation step of the small ribosomal subunit. The chain is Putative adenylate kinase from Thermoplasma acidophilum (strain ATCC 25905 / DSM 1728 / JCM 9062 / NBRC 15155 / AMRC-C165).